The primary structure comprises 389 residues: Putative sugar efflux transporter DR_1322 (389 aa).

12 helical membrane passes run 10 to 30 (AVLLLGLATSLAGPFMSLFAV), 34 to 54 (GMTPLQLGLFLTFNALSAVLV), 69 to 89 (KPLVLLTLAAGVLAYLALSGV), 96 to 116 (MATGVLLLAVSSAAFPQVFAF), 135 to 155 (VLRAVFSFAWVVGPGVGAAVL), 161 to 181 (SGVFLLAALCYALAGLPLLFI), 211 to 231 (GWVVAAFTLYGMAMHMGMVMF), 246 to 266 (VGFLVGLCALLEIPVMLLFVL), 281 to 301 (LLLFVVHFALIYLAQGMPLLI), 308 to 328 (AAVLAVMAGLGMTYFQQLMPG), 341 to 361 (SVVGSMLSGIVAGAWAQVFGY), and 363 to 383 (PVFLLCAALSLAAWGMMLWAT).

Belongs to the major facilitator superfamily. Set transporter family.

It is found in the cell membrane. Functionally, involved in the efflux of sugars. The physiological role may be the detoxification of non-metabolizable sugar analogs. The polypeptide is Putative sugar efflux transporter DR_1322 (Deinococcus radiodurans (strain ATCC 13939 / DSM 20539 / JCM 16871 / CCUG 27074 / LMG 4051 / NBRC 15346 / NCIMB 9279 / VKM B-1422 / R1)).